Reading from the N-terminus, the 333-residue chain is Beta-ketoacyl-[acyl-carrier-protein] synthase III (333 aa).

Residues C117 and H257 contribute to the active site. An ACP-binding region spans residues 258 to 262 (QANLR). N287 is an active-site residue.

This sequence belongs to the thiolase-like superfamily. FabH family. In terms of assembly, homodimer.

The protein resides in the cytoplasm. The catalysed reaction is malonyl-[ACP] + acetyl-CoA + H(+) = 3-oxobutanoyl-[ACP] + CO2 + CoA. Its pathway is lipid metabolism; fatty acid biosynthesis. Functionally, catalyzes the condensation reaction of fatty acid synthesis by the addition to an acyl acceptor of two carbons from malonyl-ACP. Catalyzes the first condensation reaction which initiates fatty acid synthesis and may therefore play a role in governing the total rate of fatty acid production. Possesses both acetoacetyl-ACP synthase and acetyl transacylase activities. Its substrate specificity determines the biosynthesis of branched-chain and/or straight-chain of fatty acids. This Azobacteroides pseudotrichonymphae genomovar. CFP2 protein is Beta-ketoacyl-[acyl-carrier-protein] synthase III.